An 832-amino-acid chain; its full sequence is Beta-galactosidase (832 aa).

The N-terminal stretch at 1-25 (MALKLVLMLMVALLAAVWSPPAVTA) is a signal peptide. The Proton donor role is filled by E183. The Nucleophile role is filled by E252. The 92-residue stretch at 741 to 832 (AYGRPKVHLS…KKLAVEAICE (92 aa)) folds into the SUEL-type lectin domain.

Belongs to the glycosyl hydrolase 35 family.

It localises to the secreted. The protein resides in the extracellular space. It is found in the apoplast. The enzyme catalyses Hydrolysis of terminal non-reducing beta-D-galactose residues in beta-D-galactosides.. This chain is Beta-galactosidase, found in Asparagus officinalis (Garden asparagus).